The chain runs to 170 residues: Adenine phosphoribosyltransferase (170 aa).

Belongs to the purine/pyrimidine phosphoribosyltransferase family. In terms of assembly, homodimer.

It is found in the cytoplasm. It catalyses the reaction AMP + diphosphate = 5-phospho-alpha-D-ribose 1-diphosphate + adenine. It functions in the pathway purine metabolism; AMP biosynthesis via salvage pathway; AMP from adenine: step 1/1. Its function is as follows. Catalyzes a salvage reaction resulting in the formation of AMP, that is energically less costly than de novo synthesis. The protein is Adenine phosphoribosyltransferase of Prochlorococcus marinus (strain AS9601).